Consider the following 464-residue polypeptide: Keratin, type I cytoskeletal 28 (464 aa).

The tract at residues 1-85 (MSLQFSNGSR…GSEGGLLSGN (85 aa)) is head. Positions 86-121 (EKVTMQNLNDRLASYLDNVRALEEANAELERKIKGW) are coil 1A. The IF rod domain maps to 86–401 (EKVTMQNLND…RLIDGDGNSC (316 aa)). Residues 122 to 143 (YEKYGPGSCRGLDHDYSRYHLT) are linker 1. The coil 1B stretch occupies residues 144 to 235 (IEDLKNKIIS…KNHEEEMKAL (92 aa)). The segment at 236–258 (QCAAGGNVNVEMNAAPGVDLAVL) is linker 12. Residues 259–397 (LNNMRAEYEA…ETYCRLIDGD (139 aa)) form a coil 2 region. A tail region spans residues 398–464 (GNSCSKSKGF…NGKTEQRVPF (67 aa)). Residues 443-464 (IHSIEEKTSKMTNGKTEQRVPF) are disordered.

This sequence belongs to the intermediate filament family. As to quaternary structure, heterotetramer of two type I and two type II keratins. As to expression, strongly expressed in skin and scalp, and weak expression observed in thymus. In the hair follicle, expressed in Henle layer, Huxley layer and in the irs cuticle. Expression extends from the bulb region up to the point of differentiation into the three layers. Also present in the medulla of beard hair (at protein level).

It localises to the cytoplasm. Functionally, essential for the proper assembly of types I and II keratin protein complexes and the formation of keratin intermediate filaments in the inner root sheath (irs). The protein is Keratin, type I cytoskeletal 28 of Homo sapiens (Human).